The primary structure comprises 89 residues: Small ribosomal subunit protein uS17 (89 aa).

Belongs to the universal ribosomal protein uS17 family. As to quaternary structure, part of the 30S ribosomal subunit.

In terms of biological role, one of the primary rRNA binding proteins, it binds specifically to the 5'-end of 16S ribosomal RNA. The chain is Small ribosomal subunit protein uS17 from Acidovorax ebreus (strain TPSY) (Diaphorobacter sp. (strain TPSY)).